The following is a 456-amino-acid chain: Bifunctional protein GlmU (456 aa).

Residues Met-1–Arg-229 form a pyrophosphorylase region. Residues Leu-11 to Gly-14, Lys-25, Gln-76, Gly-81 to Thr-82, Tyr-103 to Asp-105, Gly-140, Glu-154, Asn-169, and Asn-227 each bind UDP-N-acetyl-alpha-D-glucosamine. Asp-105 is a binding site for Mg(2+). Position 227 (Asn-227) interacts with Mg(2+). Residues Leu-230–Ala-250 form a linker region. The tract at residues Gly-251–Lys-456 is N-acetyltransferase. UDP-N-acetyl-alpha-D-glucosamine contacts are provided by Arg-333 and Lys-351. Residue His-363 is the Proton acceptor of the active site. UDP-N-acetyl-alpha-D-glucosamine is bound by residues Tyr-366 and Asn-377. Residues Ala-380, Asn-386–Tyr-387, Ser-405, Ala-423, and Arg-440 contribute to the acetyl-CoA site.

In the N-terminal section; belongs to the N-acetylglucosamine-1-phosphate uridyltransferase family. It in the C-terminal section; belongs to the transferase hexapeptide repeat family. Homotrimer. It depends on Mg(2+) as a cofactor.

It is found in the cytoplasm. The catalysed reaction is alpha-D-glucosamine 1-phosphate + acetyl-CoA = N-acetyl-alpha-D-glucosamine 1-phosphate + CoA + H(+). The enzyme catalyses N-acetyl-alpha-D-glucosamine 1-phosphate + UTP + H(+) = UDP-N-acetyl-alpha-D-glucosamine + diphosphate. Its pathway is nucleotide-sugar biosynthesis; UDP-N-acetyl-alpha-D-glucosamine biosynthesis; N-acetyl-alpha-D-glucosamine 1-phosphate from alpha-D-glucosamine 6-phosphate (route II): step 2/2. It participates in nucleotide-sugar biosynthesis; UDP-N-acetyl-alpha-D-glucosamine biosynthesis; UDP-N-acetyl-alpha-D-glucosamine from N-acetyl-alpha-D-glucosamine 1-phosphate: step 1/1. It functions in the pathway bacterial outer membrane biogenesis; LPS lipid A biosynthesis. Catalyzes the last two sequential reactions in the de novo biosynthetic pathway for UDP-N-acetylglucosamine (UDP-GlcNAc). The C-terminal domain catalyzes the transfer of acetyl group from acetyl coenzyme A to glucosamine-1-phosphate (GlcN-1-P) to produce N-acetylglucosamine-1-phosphate (GlcNAc-1-P), which is converted into UDP-GlcNAc by the transfer of uridine 5-monophosphate (from uridine 5-triphosphate), a reaction catalyzed by the N-terminal domain. The protein is Bifunctional protein GlmU of Escherichia fergusonii (strain ATCC 35469 / DSM 13698 / CCUG 18766 / IAM 14443 / JCM 21226 / LMG 7866 / NBRC 102419 / NCTC 12128 / CDC 0568-73).